Reading from the N-terminus, the 240-residue chain is Ribonuclease PH (240 aa).

Phosphate is bound by residues arginine 87 and glycine 125–arginine 127.

Belongs to the RNase PH family. As to quaternary structure, homohexameric ring arranged as a trimer of dimers.

The enzyme catalyses tRNA(n+1) + phosphate = tRNA(n) + a ribonucleoside 5'-diphosphate. Its function is as follows. Phosphorolytic 3'-5' exoribonuclease that plays an important role in tRNA 3'-end maturation. Removes nucleotide residues following the 3'-CCA terminus of tRNAs; can also add nucleotides to the ends of RNA molecules by using nucleoside diphosphates as substrates, but this may not be physiologically important. Probably plays a role in initiation of 16S rRNA degradation (leading to ribosome degradation) during starvation. The chain is Ribonuclease PH from Pseudomonas fluorescens (strain Pf0-1).